An 835-amino-acid chain; its full sequence is Protein VP3 (835 aa).

The tract at residues 171–245 (KKIKERMTTS…KDTIKLKQER (75 aa)) is N7-methyltransferase activity. The segment at 246–428 (WLGKRLSQFD…KNIKRFIPKG (183 aa)) is 2'-O-methyltransferase activity. The tract at residues 429–555 (VLYSYINNTI…NHLFILSGTD (127 aa)) is N7-methyltransferase activity. Residues 556-692 (KYFKLDQFAN…NYINKVYSIT (137 aa)) are GTase/RTPase activity. Positions 693-835 (YADDPNYFIG…KGDTVFDMTE (143 aa)) are 2'-5'-phosphodiesterase activity. Catalysis depends on for 2'-5'-phosphodiesterase activity residues H718, T720, H797, and T799.

It belongs to the rotavirus VP3 family. Interacts with VP1. Interacts with VP2.

It localises to the virion. The enzyme catalyses a 5'-end diphospho-ribonucleoside in mRNA + GTP + H(+) = a 5'-end (5'-triphosphoguanosine)-ribonucleoside in mRNA + diphosphate. The catalysed reaction is a 5'-end (5'-triphosphoguanosine)-ribonucleoside in mRNA + S-adenosyl-L-methionine = a 5'-end (N(7)-methyl 5'-triphosphoguanosine)-ribonucleoside in mRNA + S-adenosyl-L-homocysteine. It catalyses the reaction 5'-triphosphoadenylyl-(2'-&gt;5')-adenylyl-(2'-&gt;5')-adenosine + 2 H2O = 2 AMP + ATP + 2 H(+). Functionally, multifunctional enzyme involved in mRNA capping. Catalyzes the formation of the 5' cap structure on the viral plus-strand transcripts. Specifically binds to GTP and displays guanylyltransferase and methyltransferase activities. Has affinity for ssRNA but not for dsRNA. Capping activity is non-specific and caps RNAs that initiate with either a G or an A residue. Together with VP1 polymerase, forms a VP1-VP3 complex positioned near the channels situated at each of the five-fold vertices of the core. Following infection, the outermost layer of the virus is lost, leaving a double-layered particle (DLP) made up of the core and VP6 shell. VP1 then catalyzes the transcription of fully conservative plus-strand genomic RNAs that are capped by VP3 and extruded through the DLP's channels into the cytoplasm where they function as mRNAs for translation of viral proteins. DLPs probably have an RNA triphosphatase activity as well, whereas open cores do not. Counteracts the host innate immune response thanks to its phosphodiesterase that degrades the 5'-triphosphorylated, 2'-5' linked adenylate oligomers produced by the host cell IFN-inducible 2',5'-oligoadenylate synthetase (OAS). The host RNaseL is therefore not activated. The chain is Protein VP3 from Rotavirus A (strain RVA/Human/United States/DS-1/1976/G2P1B[4]) (RV-A).